The chain runs to 303 residues: MKLTYQFFIFWFFLPFFAISGDDDYKNLIFKGCANQKSPDPTGVFSQNLKNLFTSLVSQSSQSSFASVTSGTDNTTAVIGVFQCRGDLQNAQCYDCVSKIPKLVSKLCGGGRDDGNVVAARVHLAGCYIRYESSGFRQTSGTEMLFRVCGKKDSNDPGFVGKRETAFGMAENGVKTGSSGGGGGGGGFYAGQYESVYVLGQCEGSLGNSDCGECVKDGFEKAKSECGESNSGQVYLQKCFVSYSYYSHGVPNIEPLSGGEKRQHTERTIALAVGGVFVLGFVIVCLLVLRSAMKKKSNKYDAY.

Positions M1–G21 are cleaved as a signal peptide. Residues D22–T268 are Extracellular-facing. 2 consecutive Gnk2-homologous domains span residues N27–F136 and G141–H248. 6 disulfide bridges follow: C33/C108, C84/C93, C96/C127, C149/C226, C202/C211, and C214/C239. A helical transmembrane segment spans residues I269–L289. Residues I269–L289 are necessary and sufficient for plasmodesmal targeting. The Cytoplasmic segment spans residues R290–Y303.

Belongs to the cysteine-rich repeat secretory protein family. Plasmodesmata-located proteins (PDLD) subfamily. As to quaternary structure, interacts with AZI1. Interacts with PDLP5. Does not interact with DIR1. (Microbial infection) Interacts with Grapevine fanleaf virus (GFLV) 2B-MP. Interacts with Cauliflower mosaic virus (CaMV) movement protein. As to expression, highly expressed in cell suspension. Expressed in epidermal and spongy mesophyll cells, and the cell wall interface at the base of the leaf trichome (at protein level). Expressed in haustoria-containing cells.

The protein resides in the cell membrane. It is found in the cell junction. It localises to the plasmodesma. Its function is as follows. Modulates cell-to-cell trafficking. Required for systemic acquired resistance (SAR) which is mediated by the signaling molecules azelaic acid (AzA), glycerol-3-phosphate (G3P), and salicylic acid (SA). Required for the proper localization and stability of AZI1 which is involved in SAR. Mediates callose deposition during downy mildew fungal infection around haustoria. Haustoria are unicellular protrusions from hyphae and function as the site of molecular exchange of nutrients and effectors between host and pathogen. This Arabidopsis thaliana (Mouse-ear cress) protein is Plasmodesmata-located protein 1.